The following is a 226-amino-acid chain: Phosphatidylserine decarboxylase proenzyme (226 aa).

Catalysis depends on S184, which acts as the Schiff-base intermediate with substrate; via pyruvic acid. S184 carries the pyruvic acid (Ser); by autocatalysis modification.

Belongs to the phosphatidylserine decarboxylase family. PSD-A subfamily. Heterodimer of a large membrane-associated beta subunit and a small pyruvoyl-containing alpha subunit. It depends on pyruvate as a cofactor. Post-translationally, is synthesized initially as an inactive proenzyme. Formation of the active enzyme involves a self-maturation process in which the active site pyruvoyl group is generated from an internal serine residue via an autocatalytic post-translational modification. Two non-identical subunits are generated from the proenzyme in this reaction, and the pyruvate is formed at the N-terminus of the alpha chain, which is derived from the carboxyl end of the proenzyme. The post-translation cleavage follows an unusual pathway, termed non-hydrolytic serinolysis, in which the side chain hydroxyl group of the serine supplies its oxygen atom to form the C-terminus of the beta chain, while the remainder of the serine residue undergoes an oxidative deamination to produce ammonia and the pyruvoyl prosthetic group on the alpha chain.

The protein localises to the cell membrane. The catalysed reaction is a 1,2-diacyl-sn-glycero-3-phospho-L-serine + H(+) = a 1,2-diacyl-sn-glycero-3-phosphoethanolamine + CO2. It functions in the pathway phospholipid metabolism; phosphatidylethanolamine biosynthesis; phosphatidylethanolamine from CDP-diacylglycerol: step 2/2. Functionally, catalyzes the formation of phosphatidylethanolamine (PtdEtn) from phosphatidylserine (PtdSer). This Ehrlichia canis (strain Jake) protein is Phosphatidylserine decarboxylase proenzyme.